The sequence spans 276 residues: Tryptase beta-2 (276 aa).

The N-terminal stretch at 1 to 21 (MLKRRLLLLWALSLLASLVYS) is a signal peptide. Positions 22–31 (APRPANQRVG) are cleaved as a propeptide — activation peptide. The 242-residue stretch at 32–273 (IVGGHEASES…YLDWIHRYVP (242 aa)) folds into the Peptidase S1 domain. An intrachain disulfide couples cysteine 60 to cysteine 76. Histidine 75 serves as the catalytic Charge relay system. Tyrosine 98 carries the phosphotyrosine modification. The active-site Charge relay system is aspartate 122. The N-linked (GlcNAc...) asparagine glycan is linked to asparagine 133. 3 cysteine pairs are disulfide-bonded: cysteine 156/cysteine 231, cysteine 189/cysteine 212, and cysteine 221/cysteine 249. The active-site Charge relay system is the serine 225.

It belongs to the peptidase S1 family. Tryptase subfamily. Homotetramer. The active tetramer is converted to inactive monomers at neutral and acidic pH in the absence of heparin. Low concentrations of inactive monomers become active monomers at pH 6.0 in the presence of heparin. When the concentration of active monomers is higher, they convert to active monomers and then to active tetramers. These monomers are active and functionally distinct from the tetrameric enzyme. In contrast to the hidden active sites in the tetrameric form, the active site of the monomeric form is accessible for macromolecular proteins and inhibitors, e.g. fibrinogen which is a substrate for the monomeric but not for the tetrameric form. The monomeric form forms a complex with SERPINB6. As to expression, during embryogenesis, detected primarily in skin.

It localises to the secreted. It catalyses the reaction Preferential cleavage: Arg-|-Xaa, Lys-|-Xaa, but with more restricted specificity than trypsin.. In terms of biological role, tryptase is the major neutral protease present in mast cells and is secreted upon the coupled activation-degranulation response of this cell type. Plays a role in innate immunity. This chain is Tryptase beta-2 (Tpsb2), found in Mus musculus (Mouse).